The sequence spans 203 residues: Suppressor/enhancer of lin-12 protein 9 (203 aa).

A signal peptide spans 1–18; that stretch reads MNSLTWILAVLFVTPAAS. The Lumenal portion of the chain corresponds to 19 to 170; that stretch reads YFIHVDANEE…RNINENTNSR (152 aa). In terms of domain architecture, GOLD spans 28–110; sequence EQCFFDRLTS…PKAVMFTVEI (83 aa). Residues 171 to 191 traverse the membrane as a helical segment; that stretch reads VVMWAAFEAFVLVGMTVGQIF. The Cytoplasmic segment spans residues 192–203; sequence YLKRFFEVRTMV.

It belongs to the EMP24/GP25L family.

The protein resides in the cytoplasmic vesicle membrane. It is found in the cytoplasmic vesicle. It localises to the COPI-coated vesicle membrane. The protein localises to the golgi apparatus membrane. May have a role in the negative regulation of lin-12 and glp-1 transport to the cell surface. May also have a role in a quality control mechanism for endoplasmic reticulum-Golgi transport; the budding of coatomer-coated and other species of coated vesicles, could bind cargo molecules to collect them into budding vesicles. Involved in regulating the expression of proteasomal subunits such as rpt-3 in order to confer resistance to proteasomal dysfunction. This is Suppressor/enhancer of lin-12 protein 9 (sel-9) from Caenorhabditis elegans.